The following is a 23-amino-acid chain: ENFSGGCIPGYMRTADGRCKPTY.

Residues cysteine 7 and cysteine 19 are joined by a disulfide bond.

Belongs to the GBP/PSP1/paralytic peptide family. Hemolymph.

Functionally, causes rapid, rigid paralysis when injected into Lepidopteran larvae. The physiological role may be to reduce hemolymph loss following injury and promote wound healing. The polypeptide is Paralytic peptide 1 (Heliothis virescens (Tobacco budworm moth)).